The primary structure comprises 335 residues: Probable peptide ABC transporter ATP-binding protein y4tR (335 aa).

One can recognise an ABC transporter domain in the interval 15–264 (VRDLETHFYG…PTHPYTRALM (250 aa)). 49-56 (GESGCGKS) provides a ligand contact to ATP.

This sequence belongs to the ABC transporter superfamily.

It is found in the cell inner membrane. Its function is as follows. Probably part of a binding-protein-dependent transport system y4tOPQRS for a peptide. Probably responsible for energy coupling to the transport system. The chain is Probable peptide ABC transporter ATP-binding protein y4tR from Sinorhizobium fredii (strain NBRC 101917 / NGR234).